Reading from the N-terminus, the 168-residue chain is Putative defense protein 1 (168 aa).

A signal peptide spans 1–18; the sequence is MMFAYIVAVVSALALTSA. Residues 19-168 form the Reelin domain; sequence FPTGAPRSAC…SAPVKILSHH (150 aa). C28 and C105 are joined by a disulfide.

The protein belongs to the insect defense protein family. Very highly expressed in midgut, and highly expressed in fat body, silk gland and epidermis.

It is found in the secreted. As this protein is expressed upon bacterial infection, it may have antimicrobial activity. This Antheraea mylitta (Tasar silkworm) protein is Putative defense protein 1.